A 251-amino-acid chain; its full sequence is MRKPIIAGNWKMNKTLSEAQSFAEAVKNAVPSNDVVDAVIGSPALFLAPLAWNLKDSEVKLAAQNCYWENAGAFTGENSPAAIADLGVDYVIIGHSERREYFHETDEDINKKAKAIFANGMTPIFCCGETLETYEAGKTAEWIEGQITKGLVGLSNEQVASMVIAYEPIWAIGTGKSADANIADEICGVVRSTVEKLYGKEVSEAVRIQYGGSVKPENIAEYMAKENVDGALVGGASLEADSFLALLDAVK.

Residue 9–11 participates in substrate binding; that stretch reads NWK. H95 serves as the catalytic Electrophile. E167 (proton acceptor) is an active-site residue. Substrate-binding positions include G173, S213, and 234–235; that span reads GG.

It belongs to the triosephosphate isomerase family. In terms of assembly, homodimer.

It is found in the cytoplasm. The catalysed reaction is D-glyceraldehyde 3-phosphate = dihydroxyacetone phosphate. The protein operates within carbohydrate biosynthesis; gluconeogenesis. Its pathway is carbohydrate degradation; glycolysis; D-glyceraldehyde 3-phosphate from glycerone phosphate: step 1/1. In terms of biological role, involved in the gluconeogenesis. Catalyzes stereospecifically the conversion of dihydroxyacetone phosphate (DHAP) to D-glyceraldehyde-3-phosphate (G3P). This chain is Triosephosphate isomerase, found in Enterococcus faecalis (strain ATCC 700802 / V583).